The chain runs to 287 residues: ATP synthase gamma chain (287 aa).

The protein belongs to the ATPase gamma chain family. F-type ATPases have 2 components, CF(1) - the catalytic core - and CF(0) - the membrane proton channel. CF(1) has five subunits: alpha(3), beta(3), gamma(1), delta(1), epsilon(1). CF(0) has three main subunits: a, b and c.

It is found in the cell inner membrane. Its function is as follows. Produces ATP from ADP in the presence of a proton gradient across the membrane. The gamma chain is believed to be important in regulating ATPase activity and the flow of protons through the CF(0) complex. The sequence is that of ATP synthase gamma chain from Yersinia enterocolitica serotype O:8 / biotype 1B (strain NCTC 13174 / 8081).